Reading from the N-terminus, the 242-residue chain is Ubiquinone biosynthesis O-methyltransferase (242 aa).

Residues Arg-44, Gly-64, Asp-85, and Met-129 each coordinate S-adenosyl-L-methionine.

Belongs to the methyltransferase superfamily. UbiG/COQ3 family.

The catalysed reaction is a 3-demethylubiquinol + S-adenosyl-L-methionine = a ubiquinol + S-adenosyl-L-homocysteine + H(+). The enzyme catalyses a 3-(all-trans-polyprenyl)benzene-1,2-diol + S-adenosyl-L-methionine = a 2-methoxy-6-(all-trans-polyprenyl)phenol + S-adenosyl-L-homocysteine + H(+). It participates in cofactor biosynthesis; ubiquinone biosynthesis. Its function is as follows. O-methyltransferase that catalyzes the 2 O-methylation steps in the ubiquinone biosynthetic pathway. This Klebsiella pneumoniae (strain 342) protein is Ubiquinone biosynthesis O-methyltransferase.